The primary structure comprises 424 residues: Serine hydroxymethyltransferase (424 aa).

(6S)-5,6,7,8-tetrahydrofolate is bound by residues Leu-118 and 122–124 (GHL). Lys-227 is modified (N6-(pyridoxal phosphate)lysine). (6S)-5,6,7,8-tetrahydrofolate-binding positions include Glu-243 and 351-353 (SPF).

This sequence belongs to the SHMT family. In terms of assembly, homodimer. Pyridoxal 5'-phosphate serves as cofactor.

The protein localises to the cytoplasm. The catalysed reaction is (6R)-5,10-methylene-5,6,7,8-tetrahydrofolate + glycine + H2O = (6S)-5,6,7,8-tetrahydrofolate + L-serine. It functions in the pathway one-carbon metabolism; tetrahydrofolate interconversion. The protein operates within amino-acid biosynthesis; glycine biosynthesis; glycine from L-serine: step 1/1. Its function is as follows. Catalyzes the reversible interconversion of serine and glycine with tetrahydrofolate (THF) serving as the one-carbon carrier. This reaction serves as the major source of one-carbon groups required for the biosynthesis of purines, thymidylate, methionine, and other important biomolecules. Also exhibits THF-independent aldolase activity toward beta-hydroxyamino acids, producing glycine and aldehydes, via a retro-aldol mechanism. This chain is Serine hydroxymethyltransferase, found in Thermosipho africanus (strain TCF52B).